Reading from the N-terminus, the 447-residue chain is FAD-dependent monooxygenase tropB (447 aa).

A helical membrane pass occupies residues 12–32 (PLSVGIVGGGIIGVILAAGLV). FAD contacts are provided by glutamate 42, alanine 55, and arginine 124. Asparagine 153 carries N-linked (GlcNAc...) asparagine glycosylation. Residues arginine 206 and tyrosine 239 contribute to the active site. The N-linked (GlcNAc...) asparagine glycan is linked to asparagine 243. Aspartate 322 and alanine 335 together coordinate FAD.

It belongs to the paxM FAD-dependent monooxygenase family. FAD serves as cofactor.

It localises to the membrane. Its pathway is secondary metabolite biosynthesis. Functionally, FAD-dependent monooxygenase; part of the gene cluster that mediates the biosynthesis of the tropolone class of fungal maleic anhydrides. Within the pathway, tropB catalyzes a synthetically challenging asymmetric oxidative dearomatization reaction to convert 3-methylorcinaldehyde into a hydroxycyclohexadione. The pathway begins with the synthesis of 3-methylorcinaldehyde by the non-reducing polyketide synthase (PKS) tropA. 3-methylorcinaldehyde is the substrate for the FAD-dependent monooxygenase tropB to yield a dearomatized hydroxycyclohexadione. The 2-oxoglutarate-dependent dioxygenase tropC then performs the oxidative ring expansion to provide the first tropolone metabolite stipitaldehyde. Trop D converts stipitaldehyde into stipitacetal which is in turn converted to stipitalide by the short-chain dehydrogenase/reductase tropE. The next steps involve tropF, tropG, tropH, tropI and tropJ to form successive tropolone maleic anhydrides including stipitaldehydic, stipitatonic and stipitatic acids. The sequence is that of FAD-dependent monooxygenase tropB from Talaromyces stipitatus (strain ATCC 10500 / CBS 375.48 / QM 6759 / NRRL 1006) (Penicillium stipitatum).